The primary structure comprises 335 residues: Methionyl-tRNA formyltransferase (335 aa).

122–125 (SLLP) is a binding site for (6S)-5,6,7,8-tetrahydrofolate. The interval 203–222 (DSHGPLGEPQDPAKVSKAPR) is disordered.

It belongs to the Fmt family.

The catalysed reaction is L-methionyl-tRNA(fMet) + (6R)-10-formyltetrahydrofolate = N-formyl-L-methionyl-tRNA(fMet) + (6S)-5,6,7,8-tetrahydrofolate + H(+). In terms of biological role, attaches a formyl group to the free amino group of methionyl-tRNA(fMet). The formyl group appears to play a dual role in the initiator identity of N-formylmethionyl-tRNA by promoting its recognition by IF2 and preventing the misappropriation of this tRNA by the elongation apparatus. This chain is Methionyl-tRNA formyltransferase, found in Rhodopirellula baltica (strain DSM 10527 / NCIMB 13988 / SH1).